A 223-amino-acid chain; its full sequence is Endonuclease V (223 aa).

Aspartate 35 and aspartate 103 together coordinate Mg(2+).

This sequence belongs to the endonuclease V family. Mg(2+) is required as a cofactor.

It is found in the cytoplasm. The enzyme catalyses Endonucleolytic cleavage at apurinic or apyrimidinic sites to products with a 5'-phosphate.. DNA repair enzyme involved in the repair of deaminated bases. Selectively cleaves double-stranded DNA at the second phosphodiester bond 3' to a deoxyinosine leaving behind the intact lesion on the nicked DNA. This Shigella flexneri serotype 5b (strain 8401) protein is Endonuclease V.